The primary structure comprises 517 residues: GMP synthase [glutamine-hydrolyzing] (517 aa).

Residues K11–N202 enclose the Glutamine amidotransferase type-1 domain. C88 (nucleophile) is an active-site residue. Catalysis depends on residues H176 and E178. Positions W203–R392 constitute a GMPS ATP-PPase domain. ATP is bound at residue S230–S236.

Homodimer.

The enzyme catalyses XMP + L-glutamine + ATP + H2O = GMP + L-glutamate + AMP + diphosphate + 2 H(+). Its pathway is purine metabolism; GMP biosynthesis; GMP from XMP (L-Gln route): step 1/1. In terms of biological role, catalyzes the synthesis of GMP from XMP. The polypeptide is GMP synthase [glutamine-hydrolyzing] (Latilactobacillus sakei subsp. sakei (strain 23K) (Lactobacillus sakei subsp. sakei)).